Consider the following 303-residue polypeptide: Methionyl-tRNA formyltransferase (303 aa).

Residue 110–113 participates in (6S)-5,6,7,8-tetrahydrofolate binding; sequence SLLP.

It belongs to the Fmt family.

The catalysed reaction is L-methionyl-tRNA(fMet) + (6R)-10-formyltetrahydrofolate = N-formyl-L-methionyl-tRNA(fMet) + (6S)-5,6,7,8-tetrahydrofolate + H(+). Functionally, attaches a formyl group to the free amino group of methionyl-tRNA(fMet). The formyl group appears to play a dual role in the initiator identity of N-formylmethionyl-tRNA by promoting its recognition by IF2 and preventing the misappropriation of this tRNA by the elongation apparatus. The protein is Methionyl-tRNA formyltransferase of Campylobacter lari (strain RM2100 / D67 / ATCC BAA-1060).